A 362-amino-acid polypeptide reads, in one-letter code: Phosphoserine aminotransferase (362 aa).

The L-glutamate site is built by Ser9 and Arg42. Pyridoxal 5'-phosphate contacts are provided by residues 76–77 (AR), Trp102, Thr153, Asp174, and Gln197. Lys198 carries the post-translational modification N6-(pyridoxal phosphate)lysine. Residue 239–240 (NT) coordinates pyridoxal 5'-phosphate.

Belongs to the class-V pyridoxal-phosphate-dependent aminotransferase family. SerC subfamily. Homodimer. It depends on pyridoxal 5'-phosphate as a cofactor.

The protein localises to the cytoplasm. The catalysed reaction is O-phospho-L-serine + 2-oxoglutarate = 3-phosphooxypyruvate + L-glutamate. It catalyses the reaction 4-(phosphooxy)-L-threonine + 2-oxoglutarate = (R)-3-hydroxy-2-oxo-4-phosphooxybutanoate + L-glutamate. The protein operates within amino-acid biosynthesis; L-serine biosynthesis; L-serine from 3-phospho-D-glycerate: step 2/3. Its pathway is cofactor biosynthesis; pyridoxine 5'-phosphate biosynthesis; pyridoxine 5'-phosphate from D-erythrose 4-phosphate: step 3/5. Catalyzes the reversible conversion of 3-phosphohydroxypyruvate to phosphoserine and of 3-hydroxy-2-oxo-4-phosphonooxybutanoate to phosphohydroxythreonine. This is Phosphoserine aminotransferase from Photorhabdus laumondii subsp. laumondii (strain DSM 15139 / CIP 105565 / TT01) (Photorhabdus luminescens subsp. laumondii).